Consider the following 493-residue polypeptide: ATP synthase subunit beta, chloroplastic (493 aa).

ATP is bound at residue 170–177 (GGAGVGKT).

This sequence belongs to the ATPase alpha/beta chains family. F-type ATPases have 2 components, CF(1) - the catalytic core - and CF(0) - the membrane proton channel. CF(1) has five subunits: alpha(3), beta(3), gamma(1), delta(1), epsilon(1). CF(0) has four main subunits: a(1), b(1), b'(1) and c(9-12).

It is found in the plastid. It localises to the chloroplast thylakoid membrane. The catalysed reaction is ATP + H2O + 4 H(+)(in) = ADP + phosphate + 5 H(+)(out). Functionally, produces ATP from ADP in the presence of a proton gradient across the membrane. The catalytic sites are hosted primarily by the beta subunits. This Lachenalia pusilla (Cape cowslips) protein is ATP synthase subunit beta, chloroplastic.